Reading from the N-terminus, the 198-residue chain is Recombination protein RecR (198 aa).

The C4-type zinc-finger motif lies at 57–72; it reads CSICGNLTDQDPCAIC. In terms of domain architecture, Toprim spans 80 to 175; that stretch reads STILIVEDSR…KVTRLARGLA (96 aa).

This sequence belongs to the RecR family.

In terms of biological role, may play a role in DNA repair. It seems to be involved in an RecBC-independent recombinational process of DNA repair. It may act with RecF and RecO. The protein is Recombination protein RecR of Streptococcus suis (strain 05ZYH33).